The primary structure comprises 310 residues: Ribosomal RNA small subunit methyltransferase H (310 aa).

S-adenosyl-L-methionine-binding positions include 47–49 (GGH), aspartate 66, phenylalanine 93, aspartate 108, and glutamine 115. Positions 275-310 (RKPFMASEQEQADNPRSRSAKLRIARRRPDTARSGP) are disordered. A compositionally biased stretch (basic and acidic residues) spans 301–310 (RRPDTARSGP).

It belongs to the methyltransferase superfamily. RsmH family.

It localises to the cytoplasm. The enzyme catalyses cytidine(1402) in 16S rRNA + S-adenosyl-L-methionine = N(4)-methylcytidine(1402) in 16S rRNA + S-adenosyl-L-homocysteine + H(+). Functionally, specifically methylates the N4 position of cytidine in position 1402 (C1402) of 16S rRNA. This is Ribosomal RNA small subunit methyltransferase H from Synechococcus sp. (strain CC9311).